Consider the following 169-residue polypeptide: Sulfopyruvate decarboxylase subunit alpha (169 aa).

The protein belongs to the ComD family. As to quaternary structure, heterododecamer composed of 6 subunits alpha and 6 subunits beta.

It carries out the reaction 3-sulfopyruvate + H(+) = sulfoacetaldehyde + CO2. The protein operates within cofactor biosynthesis; coenzyme M biosynthesis; sulfoacetaldehyde from phosphoenolpyruvate and sulfite: step 4/4. With respect to regulation, inhibited by oxygen when heated in air at 80 degrees Celsius. The enzyme is reactivated by addition of dithionite. In terms of biological role, involved in the biosynthesis of the coenzyme M (2-mercaptoethanesulfonic acid). Catalyzes the decarboxylation of sulfopyruvate to sulfoacetaldehyde. The chain is Sulfopyruvate decarboxylase subunit alpha from Methanocaldococcus jannaschii (strain ATCC 43067 / DSM 2661 / JAL-1 / JCM 10045 / NBRC 100440) (Methanococcus jannaschii).